Here is a 274-residue protein sequence, read N- to C-terminus: TIP41-like protein (274 aa).

This sequence belongs to the TIP41 family.

This is TIP41-like protein (tiprl) from Dictyostelium discoideum (Social amoeba).